Reading from the N-terminus, the 490-residue chain is GTPase Der (490 aa).

EngA-type G domains follow at residues 3–166 (PVVA…MEDL) and 203–376 (IKLA…DSST). GTP is bound by residues 9-16 (GRPNVGKS), 56-60 (DTGGI), 118-121 (NKTD), 209-216 (GRPNVGKS), 256-260 (DTAGV), and 321-324 (NKWD). Residues 377–461 (RRVGTSMLTR…PIRIQFKEGE (85 aa)) enclose the KH-like domain.

This sequence belongs to the TRAFAC class TrmE-Era-EngA-EngB-Septin-like GTPase superfamily. EngA (Der) GTPase family. Associates with the 50S ribosomal subunit.

In terms of biological role, GTPase that plays an essential role in the late steps of ribosome biogenesis. In Shigella flexneri serotype 5b (strain 8401), this protein is GTPase Der.